The primary structure comprises 716 residues: Amino-acid acetyltransferase, mitochondrial (716 aa).

The transit peptide at 1-44 directs the protein to the mitochondrion; it reads MSPHTGWPRTVNSSLLKKHRSSLCTCQHTSSFLPRSFSTTADRH. Disordered stretches follow at residues 99 to 119 and 487 to 508; these read YPKSPDENKPEPEKLATAPTL and LSSSLPMSRRGPTNNGQGTVYP. Residues 102–112 show a composition bias toward basic and acidic residues; that stretch reads SPDENKPEPEK. A compositionally biased stretch (polar residues) spans 497-508; it reads GPTNNGQGTVYP. The N-acetyltransferase domain maps to 537-706; sequence SRPRLKLDDP…YEAVCRSTQP (170 aa).

The protein belongs to the acetyltransferase family.

Its subcellular location is the mitochondrion. It catalyses the reaction L-glutamate + acetyl-CoA = N-acetyl-L-glutamate + CoA + H(+). It participates in amino-acid biosynthesis; L-arginine biosynthesis; N(2)-acetyl-L-ornithine from L-glutamate: step 1/4. Its function is as follows. N-acetylglutamate synthase involved in arginine biosynthesis. This Neosartorya fischeri (strain ATCC 1020 / DSM 3700 / CBS 544.65 / FGSC A1164 / JCM 1740 / NRRL 181 / WB 181) (Aspergillus fischerianus) protein is Amino-acid acetyltransferase, mitochondrial (arg2).